A 376-amino-acid polypeptide reads, in one-letter code: Thymidine kinase (376 aa).

The tract at residues 1 to 39 (MASYPCHQHASAFDQAARSRGHSNRRTALRPRRQQEATE) is disordered. Positions 19–32 (SRGHSNRRTALRPR) are enriched in basic residues. 56–63 (GPHGMGKT) lines the ATP pocket. Glu-83 (proton acceptor) is an active-site residue. Residues Tyr-101 and Gln-125 each coordinate substrate. An ATP-binding site is contributed by Arg-216. Arg-222 lines the substrate pocket. Positions 260–280 (GQLSGTAVPPQGAEPQSNAGP) are disordered.

It belongs to the herpesviridae thymidine kinase family. Homodimer.

It carries out the reaction thymidine + ATP = dTMP + ADP + H(+). Catalyzes the transfer of the gamma-phospho group of ATP to thymidine to generate dTMP in the salvage pathway of pyrimidine synthesis. The dTMP serves as a substrate for DNA polymerase during viral DNA replication. Allows the virus to be reactivated and to grow in non-proliferative cells lacking a high concentration of phosphorylated nucleic acid precursors. The protein is Thymidine kinase of Human herpesvirus 1 (strain KOS) (HHV-1).